Here is a 99-residue protein sequence, read N- to C-terminus: UPF0045 protein MTH_1187 (99 aa).

This sequence belongs to the UPF0045 family. As to quaternary structure, homotetramer.

In Methanothermobacter thermautotrophicus (strain ATCC 29096 / DSM 1053 / JCM 10044 / NBRC 100330 / Delta H) (Methanobacterium thermoautotrophicum), this protein is UPF0045 protein MTH_1187.